The sequence spans 199 residues: MTSGRTGILGGSFDPIHYGHLAIAEEVRVLLRLNRVLIIPAREQPLKPGGSVASPAHRLAMARLACADNPFFEVSRIEIDRPDPSYTSVTLQLLHEQGLNDLYLILGIDSVADLPRWREVRRILELAHIVGVARPGAAVDLSHLSQVLPQLPARLIEIDGPRLDISSTDLRQRVAQGRPIRYQTPDAVVAYIEANGLYR.

It belongs to the NadD family.

It catalyses the reaction nicotinate beta-D-ribonucleotide + ATP + H(+) = deamido-NAD(+) + diphosphate. It participates in cofactor biosynthesis; NAD(+) biosynthesis; deamido-NAD(+) from nicotinate D-ribonucleotide: step 1/1. Its function is as follows. Catalyzes the reversible adenylation of nicotinate mononucleotide (NaMN) to nicotinic acid adenine dinucleotide (NaAD). The protein is Probable nicotinate-nucleotide adenylyltransferase of Roseiflexus castenholzii (strain DSM 13941 / HLO8).